The chain runs to 556 residues: MSVSAFNRRWAAVILEALTRHGVRHICIAPGSRSTPLTLAAAENSAFIHHTHFDERGLGHLALGLAKVSKQPVAVIVTSGTAVANLYPALIEAGLTGEKLILLTADRPPELIDCGANQAIRQPGMFASHPTHSISLPRPTQDISARWLVSTIDHALGTLHAGGVHINCPFAEPLYGEMDDTGLSWQQRLGDWWQDDKPWLREAPRLESEKQRDWFFWRQKRGVVVAGRMSAEEGKKVALWAQTLGWPLIGDVLSQTGQPLPCADLWLGNAKATSELQQAQIVVQLGSSLTGKRLLQWQASCEPEEYWIVDDIEGRLDPAHHRGRRLIANIADWLELHPAEKRQPWCIEIPRLAEQAMQAVIARRDAFGEAQLAHRISDYLPEQGQLFVGNSLVVRLIDALSQLPAGYPVYSNRGASGIDGLLSTAAGVQRASGKPTLAIVGDLSALYDLNALALLRQVSAPLVLIVVNNNGGQIFSLLPTPKSERERFYLMPQNVHFEHAAAMFELKYHRPQNWQELETALADAWRTPTTTVIEMVVNDTDGAQTLQQLLAQVSHL.

The protein belongs to the TPP enzyme family. MenD subfamily. Homodimer. Mg(2+) is required as a cofactor. It depends on Mn(2+) as a cofactor. The cofactor is thiamine diphosphate.

It carries out the reaction isochorismate + 2-oxoglutarate + H(+) = 5-enolpyruvoyl-6-hydroxy-2-succinyl-cyclohex-3-ene-1-carboxylate + CO2. Its pathway is quinol/quinone metabolism; 1,4-dihydroxy-2-naphthoate biosynthesis; 1,4-dihydroxy-2-naphthoate from chorismate: step 2/7. It functions in the pathway quinol/quinone metabolism; menaquinone biosynthesis. Its function is as follows. Catalyzes the thiamine diphosphate-dependent decarboxylation of 2-oxoglutarate and the subsequent addition of the resulting succinic semialdehyde-thiamine pyrophosphate anion to isochorismate to yield 2-succinyl-5-enolpyruvyl-6-hydroxy-3-cyclohexene-1-carboxylate (SEPHCHC). In Escherichia fergusonii (strain ATCC 35469 / DSM 13698 / CCUG 18766 / IAM 14443 / JCM 21226 / LMG 7866 / NBRC 102419 / NCTC 12128 / CDC 0568-73), this protein is 2-succinyl-5-enolpyruvyl-6-hydroxy-3-cyclohexene-1-carboxylate synthase.